The primary structure comprises 401 residues: Cytochrome P450 BJ-1 (401 aa).

Cys-350 lines the heme pocket.

Belongs to the cytochrome P450 family. Heme serves as cofactor.

Functionally, cytochromes P450 are a group of heme-thiolate monooxygenases. They oxidize a variety of structurally unrelated compounds, including steroids, fatty acids, and xenobiotics. This Bradyrhizobium diazoefficiens (strain JCM 10833 / BCRC 13528 / IAM 13628 / NBRC 14792 / USDA 110) protein is Cytochrome P450 BJ-1 (cyp112).